The sequence spans 1136 residues: Type I inositol polyphosphate 5-phosphatase 13 (1136 aa).

WD repeat units follow at residues 147–185 (ETQT…EAGC), 205–244 (VTTS…VSHD), 259–297 (AHRG…KSLL), 436–475 (EDTR…RDVN), and 515–552 (SHNE…PLDN). 2 catalytic regions span residues 782 to 798 (DMVA…FGIT) and 861 to 876 (KKRI…YRDT). Lys940 participates in a covalent cross-link: Glycyl lysine isopeptide (Lys-Gly) (interchain with G-Cter in ubiquitin). A disordered region spans residues 1104-1136 (KNLGGSRRYPTDITRNGSTRPRTEDSVRRGKSR). The span at 1124–1136 (PRTEDSVRRGKSR) shows a compositional bias: basic and acidic residues.

It belongs to the inositol polyphosphate 5-phosphatase family. As to quaternary structure, interacts with KIN10, but not with PHOT1. Requires Mg(2+) as cofactor. As to expression, expressed in young seedlings and flowers. Highly expressed in anther and pollen grains, but not in pistils. Not detected in maturated roots, stems and rosette leaves.

The protein localises to the nucleus. The catalysed reaction is 1D-myo-inositol 1,4,5-trisphosphate + H2O = 1D-myo-inositol 1,4-bisphosphate + phosphate. In terms of biological role, converts inositol 1,4,5-trisphosphate (Ins(1,4,5)P3) to inositol 1,4-bisphosphate. Modulates cotyledon vein development through regulating auxin homeostasis. Involved in blue light responses. Decreases the amount of KIN10 degraded by the proteasome under low nutrient conditions. Participates with IP5P12 in the control of Ins(1,4,5)P3/Ca(2+) levels that is crucial for maintaining pollen dormancy and regulating early germination of pollen. May modulate auxin transport by regulating vesicle trafficking and thereby plays a role in root gravitropism. The protein is Type I inositol polyphosphate 5-phosphatase 13 of Arabidopsis thaliana (Mouse-ear cress).